The sequence spans 585 residues: Arginine--tRNA ligase (585 aa).

The 'HIGH' region motif lies at 127–137 (PNTNKPLHVGH).

Belongs to the class-I aminoacyl-tRNA synthetase family. In terms of assembly, monomer.

It is found in the cytoplasm. It carries out the reaction tRNA(Arg) + L-arginine + ATP = L-arginyl-tRNA(Arg) + AMP + diphosphate. The protein is Arginine--tRNA ligase of Borreliella afzelii (strain PKo) (Borrelia afzelii).